Reading from the N-terminus, the 973-residue chain is Isoleucine--tRNA ligase, mitochondrial (973 aa).

A 'HIGH' region motif is present at residues 87–97 (PFANGRLHIGH). The short motif at 625 to 629 (KQSKS) is the 'KMSKS' region element. Lysine 628 is a binding site for ATP.

It belongs to the class-I aminoacyl-tRNA synthetase family.

The protein localises to the cytoplasm. It is found in the mitochondrion matrix. The catalysed reaction is tRNA(Ile) + L-isoleucine + ATP = L-isoleucyl-tRNA(Ile) + AMP + diphosphate. This Schizosaccharomyces pombe (strain 972 / ATCC 24843) (Fission yeast) protein is Isoleucine--tRNA ligase, mitochondrial (ism1).